The following is a 257-amino-acid chain: Putative pentatricopeptide repeat-containing protein At1g43010 (257 aa).

2 PPR repeats span residues 133-168 (KMRD…GFLL) and 169-203 (KPYL…NMEV).

Belongs to the PPR family. P subfamily.

This chain is Putative pentatricopeptide repeat-containing protein At1g43010, found in Arabidopsis thaliana (Mouse-ear cress).